Here is a 276-residue protein sequence, read N- to C-terminus: Undecaprenyl-diphosphatase (276 aa).

Transmembrane regions (helical) follow at residues M85–I105, V108–W128, V187–E207, V217–C237, and F253–I273.

It belongs to the UppP family.

It is found in the cell inner membrane. It carries out the reaction di-trans,octa-cis-undecaprenyl diphosphate + H2O = di-trans,octa-cis-undecaprenyl phosphate + phosphate + H(+). Catalyzes the dephosphorylation of undecaprenyl diphosphate (UPP). Confers resistance to bacitracin. This chain is Undecaprenyl-diphosphatase, found in Burkholderia mallei (strain NCTC 10247).